We begin with the raw amino-acid sequence, 154 residues long: uncharacterized protein (154 aa).

Residues 1 to 19 form the signal peptide; sequence MWSLKSTLCIALLVTYSVA. ShKT domains are found at residues 67 to 102 and 113 to 150; these read CADD…CGFC and CVDS…CKLC. Cystine bridges form between Cys-67-Cys-102, Cys-75-Cys-95, Cys-82-Cys-99, Cys-113-Cys-150, Cys-120-Cys-143, and Cys-129-Cys-147.

This is an uncharacterized protein from Caenorhabditis elegans.